A 444-amino-acid polypeptide reads, in one-letter code: Deoxyguanosinetriphosphate triphosphohydrolase-like protein (444 aa).

An HD domain is found at 66–259 (RLTHSLEAAQ…MELADDIAYG (194 aa)).

It belongs to the dGTPase family. Type 2 subfamily.

The polypeptide is Deoxyguanosinetriphosphate triphosphohydrolase-like protein (Vibrio campbellii (strain ATCC BAA-1116)).